The primary structure comprises 296 residues: NAD kinase (296 aa).

Residue Asp73 is the Proton acceptor of the active site. Residues 73–74 (DG), Lys78, 151–152 (NE), Arg178, Asp180, and 191–196 (TAHAMS) contribute to the NAD(+) site.

The protein belongs to the NAD kinase family. It depends on a divalent metal cation as a cofactor.

It localises to the cytoplasm. The enzyme catalyses NAD(+) + ATP = ADP + NADP(+) + H(+). Functionally, involved in the regulation of the intracellular balance of NAD and NADP, and is a key enzyme in the biosynthesis of NADP. Catalyzes specifically the phosphorylation on 2'-hydroxyl of the adenosine moiety of NAD to yield NADP. This chain is NAD kinase, found in Francisella tularensis subsp. tularensis (strain FSC 198).